The primary structure comprises 228 residues: Lipoprotein-releasing system ATP-binding protein LolD (228 aa).

The ABC transporter domain maps to 6 to 227; the sequence is LELLGIDRTY…LKDGKLIDYV (222 aa). 42-49 contacts ATP; it reads GPSGSGKS.

The protein belongs to the ABC transporter superfamily. Lipoprotein translocase (TC 3.A.1.125) family. In terms of assembly, the complex is composed of two ATP-binding proteins (LolD) and two transmembrane proteins (LolC and LolE).

It is found in the cell inner membrane. Its function is as follows. Part of the ABC transporter complex LolCDE involved in the translocation of mature outer membrane-directed lipoproteins, from the inner membrane to the periplasmic chaperone, LolA. Responsible for the formation of the LolA-lipoprotein complex in an ATP-dependent manner. This Hyphomonas neptunium (strain ATCC 15444) protein is Lipoprotein-releasing system ATP-binding protein LolD.